Reading from the N-terminus, the 70-residue chain is Putative membrane protein insertion efficiency factor (70 aa).

It belongs to the UPF0161 family.

It is found in the cell inner membrane. Could be involved in insertion of integral membrane proteins into the membrane. This is Putative membrane protein insertion efficiency factor from Rhizorhabdus wittichii (strain DSM 6014 / CCUG 31198 / JCM 15750 / NBRC 105917 / EY 4224 / RW1) (Sphingomonas wittichii).